An 85-amino-acid polypeptide reads, in one-letter code: MSQISERVIDLISEKLNVEKSEVTLEADFANNLGADSLDTVELIMDLEKEFNMNPIPNDESIAIKTVGDAIAYIESHANEAATKS.

The 77-residue stretch at 2 to 78 (SQISERVIDL…DAIAYIESHA (77 aa)) folds into the Carrier domain. Ser-37 bears the O-(pantetheine 4'-phosphoryl)serine mark.

This sequence belongs to the acyl carrier protein (ACP) family. 4'-phosphopantetheine is transferred from CoA to a specific serine of apo-ACP by AcpS. This modification is essential for activity because fatty acids are bound in thioester linkage to the sulfhydryl of the prosthetic group.

Its subcellular location is the cytoplasm. The protein operates within lipid metabolism; fatty acid biosynthesis. Its function is as follows. Carrier of the growing fatty acid chain in fatty acid biosynthesis. This Azobacteroides pseudotrichonymphae genomovar. CFP2 protein is Acyl carrier protein.